A 99-amino-acid chain; its full sequence is MDSSRKYKRCGFGAALFVANIFFSLLSLHCISGAHGHQQRMKESVMGSEPPVCATKCRNCKPCLPYLFDIRGAHDDDDDSEPYYPVKWICRCRDRVFEP.

The first 35 residues, 1–35 (MDSSRKYKRCGFGAALFVANIFFSLLSLHCISGAH), serve as a signal peptide directing secretion. 3 disulfide bridges follow: Cys-53–Cys-90, Cys-57–Cys-63, and Cys-60–Cys-92.

Belongs to the plant cysteine rich small secretory peptide family. Epidermal patterning factor subfamily.

It is found in the secreted. Controls stomatal patterning. The polypeptide is EPIDERMAL PATTERNING FACTOR-like protein 8 (Arabidopsis thaliana (Mouse-ear cress)).